Consider the following 487-residue polypeptide: WD-40 repeat-containing protein MSI5 (487 aa).

Residue methionine 1 is modified to N-acetylmethionine. Positions 1-12 are enriched in low complexity; the sequence is MESEAAATVQAT. The tract at residues 1–44 is disordered; sequence MESEAAATVQATRPRRAPRTPVTAILTDKRRRKPKSNNESQLPF. The Nuclear localization signal signature appears at 14–21; that stretch reads PRRAPRTP. WD repeat units lie at residues 142–182, 197–237, 270–310, 315–355, 364–404, and 419–466; these read IHPG…DRYA, GHQD…TMAG, GHKD…SPAM, AHDA…SNGV, GHRA…KKSE, and GHRD…YRPE. The interval 236–268 is disordered; that stretch reads AGSDSKSPGSSFKQTGEGSDKTGGPSVGPRGIY. Residues 237 to 252 are compositionally biased toward polar residues; that stretch reads GSDSKSPGSSFKQTGE. A DWD box motif is present at residues 288 to 303; the sequence is FCSVGDDSCLMLWDAR.

Belongs to the WD repeat RBAP46/RBAP48/MSI1 family. As to quaternary structure, interacts with AHL16. Interacts with LHP1, PDP2, PDP3 and PDP6. Component of the PRC2 (polycomb repressive complex 2) complex which regulates histone methylation on histone H3K27.

Its subcellular location is the nucleus. Functionally, core histone-binding subunit that may target chromatin assembly factors, chromatin remodeling factors and histone deacetylases to their histone substrates in a manner that is regulated by nucleosomal DNA. Acts together with PDP1 and MSI4/FVE to regulate the function of the PRC2 complex on FLC. This Arabidopsis thaliana (Mouse-ear cress) protein is WD-40 repeat-containing protein MSI5.